A 257-amino-acid polypeptide reads, in one-letter code: Ribonuclease HII (257 aa).

The RNase H type-2 domain maps to 72–257 (TYIAGIDEVG…FAPIKDMIQK (186 aa)). Residues aspartate 78, glutamate 79, and aspartate 170 each contribute to the a divalent metal cation site.

This sequence belongs to the RNase HII family. The cofactor is Mn(2+). Mg(2+) is required as a cofactor.

It localises to the cytoplasm. It carries out the reaction Endonucleolytic cleavage to 5'-phosphomonoester.. Functionally, endonuclease that specifically degrades the RNA of RNA-DNA hybrids. This chain is Ribonuclease HII, found in Bacillus cereus (strain ATCC 14579 / DSM 31 / CCUG 7414 / JCM 2152 / NBRC 15305 / NCIMB 9373 / NCTC 2599 / NRRL B-3711).